The sequence spans 185 residues: HTH-type transcriptional regulator SAR2658 (185 aa).

The 61-residue stretch at 6–66 (KENRQRIEEI…YVIQRDLDIF (61 aa)) folds into the HTH tetR-type domain. Residues 29-48 (SMNRIAKELGIGMGTLYRHF) constitute a DNA-binding region (H-T-H motif).

The sequence is that of HTH-type transcriptional regulator SAR2658 from Staphylococcus aureus (strain MRSA252).